The sequence spans 340 residues: Ketol-acid reductoisomerase (NADP(+)) (340 aa).

The 183-residue stretch at 1–183 (MAITVYYDKD…GGGRTGIIET (183 aa)) folds into the KARI N-terminal Rossmann domain. Residues 26–29 (FGSQ), Arg-49, Ser-52, Ser-54, and 84–87 (DEIQ) each bind NADP(+). His-109 is an active-site residue. Gly-135 contacts NADP(+). The region spanning 184 to 329 (TFKAETETDL…RNLRAMMPWI (146 aa)) is the KARI C-terminal knotted domain. Mg(2+)-binding residues include Asp-192, Glu-196, Glu-228, and Glu-232. Position 253 (Ser-253) interacts with substrate.

The protein belongs to the ketol-acid reductoisomerase family. The cofactor is Mg(2+).

It carries out the reaction (2R)-2,3-dihydroxy-3-methylbutanoate + NADP(+) = (2S)-2-acetolactate + NADPH + H(+). It catalyses the reaction (2R,3R)-2,3-dihydroxy-3-methylpentanoate + NADP(+) = (S)-2-ethyl-2-hydroxy-3-oxobutanoate + NADPH + H(+). It participates in amino-acid biosynthesis; L-isoleucine biosynthesis; L-isoleucine from 2-oxobutanoate: step 2/4. It functions in the pathway amino-acid biosynthesis; L-valine biosynthesis; L-valine from pyruvate: step 2/4. Functionally, involved in the biosynthesis of branched-chain amino acids (BCAA). Catalyzes an alkyl-migration followed by a ketol-acid reduction of (S)-2-acetolactate (S2AL) to yield (R)-2,3-dihydroxy-isovalerate. In the isomerase reaction, S2AL is rearranged via a Mg-dependent methyl migration to produce 3-hydroxy-3-methyl-2-ketobutyrate (HMKB). In the reductase reaction, this 2-ketoacid undergoes a metal-dependent reduction by NADPH to yield (R)-2,3-dihydroxy-isovalerate. In Campylobacter jejuni subsp. doylei (strain ATCC BAA-1458 / RM4099 / 269.97), this protein is Ketol-acid reductoisomerase (NADP(+)).